Reading from the N-terminus, the 150-residue chain is Probable NADH dehydrogenase [ubiquinone] 1 alpha subcomplex subunit 5 (150 aa).

Belongs to the complex I NDUFA5 subunit family. In terms of assembly, complex I is composed of 45 different subunits.

The protein resides in the mitochondrion inner membrane. In terms of biological role, accessory subunit of the mitochondrial membrane respiratory chain NADH dehydrogenase (Complex I), that is believed not to be involved in catalysis. Complex I functions in the transfer of electrons from NADH to the respiratory chain. The immediate electron acceptor for the enzyme is believed to be ubiquinone. This Caenorhabditis elegans protein is Probable NADH dehydrogenase [ubiquinone] 1 alpha subcomplex subunit 5.